A 424-amino-acid polypeptide reads, in one-letter code: MKKLLFAIPLVVPFYSHSAETVESCLAKPHTENSFTNVWKDDKTLDRYANYEGCLWNATGVVVCTGDETQCYGTWVPIGLAIPENEGGGSEGGGSEGGGSEGGGTKPPEYGDTPIPGYTYINPLDGTYPPGTEQNPANPNPSLEESQPLNTFMFQNNRFRNRQGALTVYTGTVTQGTDPVKTYYQYTPVSSKAMYDAYWNGKFRDCAFHSGFNEDPFVCEYQGQSSDLPQPPVNAGGGSGGGSGGGSEGGGSEGGGSEGGGSEGGGSGGGSGSGDFDYEKMANANKGAMTENADENALQSDAKGKLDSVATDYGAAIDGFIGDVSGLANGNGATGDFAGSNSQMAQVGDGDNSPLMNNFRQYLPSLPQSVECRPFVFSAGKPYEFSIDCDKINLFRGVFAFLLYVATFMYVFSTFANILRNKES.

An N-terminal signal peptide occupies residues 1 to 18 (MKKLLFAIPLVVPFYSHS). Residues 19 to 85 (AETVESCLAK…VPIGLAIPEN (67 aa)) form an N1 region. 2 disulfide bridges follow: Cys-25/Cys-54 and Cys-64/Cys-71. Residues 83–147 (PENEGGGSEG…NPNPSLEESQ (65 aa)) form a disordered region. The interval 86–104 (EGGGSEGGGSEGGGSEGGG) is G1 (Gly-rich linker). Residues 86 to 105 (EGGGSEGGGSEGGGSEGGGT) show a composition bias toward gly residues. A hinge region spans residues 105 to 141 (TKPPEYGDTPIPGYTYINPLDGTYPPGTEQNPANPNP). The span at 132–147 (TEQNPANPNPSLEESQ) shows a compositional bias: polar residues. Residues 142–228 (SLEESQPLNT…CEYQGQSSDL (87 aa)) form an N2 region. A disulfide bond links Cys-206 and Cys-219. The disordered stretch occupies residues 222 to 279 (QGQSSDLPQPPVNAGGGSGGGSGGGSEGGGSEGGGSEGGGSEGGGSGGGSGSGDFDYE). The segment covering 235–273 (AGGGSGGGSGGGSEGGGSEGGGSEGGGSEGGGSGGGSGS) has biased composition (gly residues). The interval 236–274 (GGGSGGGSGGGSEGGGSEGGGSEGGGSEGGGSGGGSGSG) is G2 (Gly-rich linker). Positions 253–262 (EGGGSEGGGS) are not essential for gene 3 function. Positions 275 to 424 (DFDYEKMANA…FANILRNKES (150 aa)) are CT. A helical transmembrane segment spans residues 398–418 (VFAFLLYVATFMYVFSTFANI).

The protein belongs to the inovirus G3P protein family. As to quaternary structure, interacts with G6P; this interaction is required for proper integration of G3P and G6P into the virion. Interacts with G8P. Interacts with the tip of the host pilus. Interacts (via N-terminus) with host TolA. Interacts (via transmembrane domain) with host TolQ (via 2nd and 3rd transmembrane domains); this interaction allows the phage translocation across the host inner membrane. Interacts (via transmembrane domain) with host TolR (via transmembrane domain); this interaction allows the phage translocation across the host inner membrane. Post-translationally, in one of the crystallographic structures Trp-39 is oxidized to 1',2'-dihydro-2'-oxotryptophan.

The protein resides in the virion. The protein localises to the host membrane. Its function is as follows. Plays essential roles both in the penetration of the viral genome into the bacterial host via pilus retraction and in the extrusion process. During the initial step of infection, G3P mediates adsorption of the phage to its primary receptor, the tip of host F-pilus. Attachment of the phage causes pilus retraction bringing the viral particle into close proximity of the host cell inner membrane. Binding to the host pilus initiates a change in the G3P conformation, allowing subsequent interaction with the host entry receptors TolA, TolQ and TolR and penetration of the viral DNA into the host cytoplasm. In the extrusion process, G3P mediates the release of the membrane-anchored virion from the cell via its C-terminal domain. The protein is Attachment protein G3P (III) of Enterobacteria phage M13 (Bacteriophage M13).